The sequence spans 631 residues: MAPPGSSAVFLLALTITASTQALTPTHYLTKHDVERLKASLDRPFTSLESAFYSIVGLNSLGAQVPDVKKACAFIKSNLDPSNVDSLFYAAQSSQVLSGCEISVSNETRDLLLAAVSEDSSVAQIYHAVAALSGFGLPLASHEALGALTARLSKEETVLATVQALHTASHLSQQADLRNIVEEIEDLVARLDELGGVYLQFEEGLELTALFVAATYKLMDHVGTEPSIKEDQVIQLMNTIFSKKNFESLSEAFSVASAAAALSQNRYHVPVVVVPEGSASDTQEQAILRLQVSSVLSQPLAQAAVKLEHAKSVASRATVLQKMPFSLVGDVFELNFKNVKLPSGYYDFSVRVEGDNRYIANTVELRVKISTEVGITNVDLSTVDKDQSIAPKTTRVTYPAKAKGTFIADSHQNFALFFQLVDVNTGAELTPHQTFVRLHNQKTGQEVVFVAEPDNKNVYKFELDTSERKIEFDSASGTYTLYLIIGDATLKNPILWNVADVVIKFPEEEAPSTVLSQNLFTPKQEIQHLFREPEKRPPTVVSNTFTALILSPLLLLFALWIRIGANVSNFTFAPSTVIFHLGHAAMLGLMYVYWTQLNMFQTLKYLAVLGTVTFLAGNRMLAQQAVKRTAH.

A signal peptide spans 1–22 (MAPPGSSAVFLLALTITASTQA). The Lumenal portion of the chain corresponds to 23–540 (LTPTHYLTKH…REPEKRPPTV (518 aa)). N-linked (GlcNAc...) asparagine glycosylation occurs at Asn106. Lys154 participates in a covalent cross-link: Glycyl lysine isopeptide (Lys-Gly) (interchain with G-Cter in ubiquitin). The helical transmembrane segment at 541 to 561 (VSNTFTALILSPLLLLFALWI) threads the bilayer. Topologically, residues 562-571 (RIGANVSNFT) are cytoplasmic. The helical transmembrane segment at 572 to 592 (FAPSTVIFHLGHAAMLGLMYV) threads the bilayer. The Lumenal portion of the chain corresponds to 593–596 (YWTQ). A helical transmembrane segment spans residues 597-617 (LNMFQTLKYLAVLGTVTFLAG). Residues 618–631 (NRMLAQQAVKRTAH) lie on the Cytoplasmic side of the membrane.

The protein belongs to the SWP1 family. In terms of assembly, component of the oligosaccharyltransferase (OST) complex. OST exists in two different complex forms which contain common core subunits RPN1, RPN2, OST48, OST4, DAD1 and TMEM258, either STT3A or STT3B as catalytic subunits, and form-specific accessory subunits. STT3A complex assembly occurs through the formation of 3 subcomplexes. Subcomplex 1 contains RPN1 and TMEM258, subcomplex 2 contains the STT3A-specific subunits STT3A, DC2/OSTC, and KCP2 as well as the core subunit OST4, and subcomplex 3 contains RPN2, DAD1, and OST48. The STT3A complex can form stable complexes with the Sec61 complex or with both the Sec61 and TRAP complexes. Interacts with DDI2. Interacts with TMEM35A/NACHO.

It localises to the endoplasmic reticulum. The protein resides in the endoplasmic reticulum membrane. It functions in the pathway protein modification; protein glycosylation. Functionally, subunit of the oligosaccharyl transferase (OST) complex that catalyzes the initial transfer of a defined glycan (Glc(3)Man(9)GlcNAc(2) in eukaryotes) from the lipid carrier dolichol-pyrophosphate to an asparagine residue within an Asn-X-Ser/Thr consensus motif in nascent polypeptide chains, the first step in protein N-glycosylation. N-glycosylation occurs cotranslationally and the complex associates with the Sec61 complex at the channel-forming translocon complex that mediates protein translocation across the endoplasmic reticulum (ER). All subunits are required for a maximal enzyme activity. This Rattus norvegicus (Rat) protein is Dolichyl-diphosphooligosaccharide--protein glycosyltransferase subunit 2.